The chain runs to 153 residues: 3-hydroxyacyl-[acyl-carrier-protein] dehydratase FabZ (153 aa).

Residue histidine 57 is part of the active site.

The protein belongs to the thioester dehydratase family. FabZ subfamily.

The protein resides in the cytoplasm. The enzyme catalyses a (3R)-hydroxyacyl-[ACP] = a (2E)-enoyl-[ACP] + H2O. In terms of biological role, involved in unsaturated fatty acids biosynthesis. Catalyzes the dehydration of short chain beta-hydroxyacyl-ACPs and long chain saturated and unsaturated beta-hydroxyacyl-ACPs. The chain is 3-hydroxyacyl-[acyl-carrier-protein] dehydratase FabZ from Xanthomonas campestris pv. campestris (strain 8004).